The sequence spans 290 residues: Small ribosomal subunit protein uS2 (290 aa).

Residues 269–290 (WEAEASGDWAAESAQPNPETKW) are disordered.

It belongs to the universal ribosomal protein uS2 family. In terms of assembly, component of the small ribosomal subunit. Mature ribosomes consist of a small (40S) and a large (60S) subunit. The 40S subunit contains about 33 different proteins and 1 molecule of RNA (18S). The 60S subunit contains about 49 different proteins and 3 molecules of RNA (25S, 5.8S and 5S). Interacts with rps21.

It localises to the cytoplasm. Required for the assembly and/or stability of the 40S ribosomal subunit. Required for the processing of the 20S rRNA-precursor to mature 18S rRNA in a late step of the maturation of 40S ribosomal subunits. In Talaromyces marneffei (strain ATCC 18224 / CBS 334.59 / QM 7333) (Penicillium marneffei), this protein is Small ribosomal subunit protein uS2 (rps0).